The primary structure comprises 283 residues: Pantothenate synthetase (283 aa).

26–33 provides a ligand contact to ATP; it reads MGNLHEGH. His-33 (proton donor) is an active-site residue. Gln-57 is a (R)-pantoate binding site. Residue Gln-57 coordinates beta-alanine. Residue 144-147 participates in ATP binding; sequence GKKD. Gln-150 is a binding site for (R)-pantoate. Residues Ile-173 and 181 to 184 contribute to the ATP site; that span reads LSSR.

Belongs to the pantothenate synthetase family. In terms of assembly, homodimer.

The protein localises to the cytoplasm. The catalysed reaction is (R)-pantoate + beta-alanine + ATP = (R)-pantothenate + AMP + diphosphate + H(+). It functions in the pathway cofactor biosynthesis; (R)-pantothenate biosynthesis; (R)-pantothenate from (R)-pantoate and beta-alanine: step 1/1. Its function is as follows. Catalyzes the condensation of pantoate with beta-alanine in an ATP-dependent reaction via a pantoyl-adenylate intermediate. This is Pantothenate synthetase from Polynucleobacter necessarius subsp. necessarius (strain STIR1).